The sequence spans 252 residues: Ribosomal RNA small subunit methyltransferase J (252 aa).

S-adenosyl-L-methionine-binding positions include 101 to 102 (RD), 117 to 118 (ER), 153 to 154 (SS), and aspartate 171.

The protein belongs to the methyltransferase superfamily. RsmJ family.

It is found in the cytoplasm. The catalysed reaction is guanosine(1516) in 16S rRNA + S-adenosyl-L-methionine = N(2)-methylguanosine(1516) in 16S rRNA + S-adenosyl-L-homocysteine + H(+). In terms of biological role, specifically methylates the guanosine in position 1516 of 16S rRNA. The chain is Ribosomal RNA small subunit methyltransferase J from Salmonella typhi.